The sequence spans 516 residues: Cytochrome P450 monooxygenase dtxS2 (516 aa).

Residues 23–43 (ILASVIVLLGLKVATILYTAF) traverse the membrane as a helical segment. An N-linked (GlcNAc...) asparagine glycan is attached at N187. Residues 229-249 (VLVPLLVFPYISWLLVWWLLS) traverse the membrane as a helical segment. C458 provides a ligand contact to heme.

It belongs to the cytochrome P450 family. It depends on heme as a cofactor.

It is found in the membrane. Its pathway is secondary metabolite biosynthesis. Functionally, cytochrome P450 monooxygenase; part of the gene cluster that mediates the biosynthesis of destruxins, insecticidal cyclic hexadepsipeptides which induce flaccid paralysis and visceral muscle contraction in insects through targeting the calcium channels and vacuolar-type ATPases. The aldo-keto reductase dtxS3 converts alpha-ketoisocaproic acid from deaminated leucine into alpha-hydroxyisocaproic acid (HIC), which is the first substrate for destruxin assembly by dtxS1. L-aspartate decarboxylase dtxS4 converts aspartic acid into beta-alanine, the last substrate for the destruxin assembly line performed by dtxS1. The nonribosomal peptide synthetase dtxS1 synthesizes destruxins B and B2, whereas the cytochrome P450 monooxygenase dtxS2 is required to convert destruxin B into other destruxin derivatives, including destructins C, D, A and E. Destruxin E-diol (ED) is further produced in a non-enzymatic manner from destruxin E. Destruxins play an important role in virulence and escape from insect host immune defenses. The sequence is that of Cytochrome P450 monooxygenase dtxS2 from Metarhizium robertsii (strain ARSEF 23 / ATCC MYA-3075) (Metarhizium anisopliae (strain ARSEF 23)).